Reading from the N-terminus, the 399-residue chain is Fructose-bisphosphate aldolase 1, chloroplastic (399 aa).

Residues 1-48 (MASSTATMLKASPVKSDWVKGQSLLLRQPSSVSAIRSHVAPSALTVRA) constitute a chloroplast transit peptide. Substrate is bound at residue Arg-96. A Phosphoserine modification is found at Ser-158. Lys-186 is a binding site for substrate. At Ser-216 the chain carries Phosphoserine. Residue Glu-226 is the Proton acceptor of the active site. The active-site Schiff-base intermediate with dihydroxyacetone-P is Lys-268. 310–312 (SGG) contributes to the substrate binding site. Residue Lys-395 is modified to N6,N6,N6-trimethyllysine.

The protein belongs to the class I fructose-bisphosphate aldolase family. In terms of assembly, homotetramer. Post-translationally, can be trimethylated at Lys-395 by LSMT-L, but the trimethylation has no effect in vitro on the kinetic properties of the enzyme. In terms of processing, S-glutathionylated. As to expression, highly expressed in rosettes leaves and cauline leaves.

It is found in the plastid. It localises to the chloroplast. The protein localises to the plastoglobule. Its subcellular location is the chloroplast stroma. It catalyses the reaction beta-D-fructose 1,6-bisphosphate = D-glyceraldehyde 3-phosphate + dihydroxyacetone phosphate. It functions in the pathway carbohydrate degradation; glycolysis; D-glyceraldehyde 3-phosphate and glycerone phosphate from D-glucose: step 4/4. In terms of biological role, plays a key role in glycolysis and gluconeogenesis. This chain is Fructose-bisphosphate aldolase 1, chloroplastic, found in Arabidopsis thaliana (Mouse-ear cress).